The primary structure comprises 846 residues: MTQVTVKELAQEVEAPVERLLQQMREAGLPHTDAGQVVTDNEKQTLLTHLKSSHKSKAEEPRKITLQRKTTSTLRVAGSKSISVEVRKKKVFVQRSPEEIQAEQKRELDERRAAENAARDKVEAEVRQRNEEQARRQAAGSAAAAPAPAAKPEPAPAAAPVAAPAPVVADAPASEDAAARAAERKKDETRRNESRTRDDDRRRGEAPRVSIKVKVKEKEKAPTPRAAPRTTDEESDGARRGRGGKSKLKKRNQHGFQNPTGPVIRDVTIGETITVSELANQMSVKGAEVVKFMFKMGTPVTINQVLDQETAQLIAEELGHKVTLVSDTALEDSLAESLKFEGQTESRAPVVTVMGHVDHGKTSLLDYIRRAKVAAGEAGGITQHIGAYHVETDRGMVTFLDTPGHAAFTQMRARGAKATDIVILVVAADDGVMPQTREAVQHAKAAGVPLVVAVNKIDKPGADLDRIRNELSVEGVTSEDWGGDTPFVKVSAKMGTGVDELLEAVLLQAEILELTATPTAPGRGVVVESRLDKGRGPVATILVQDGTLRQGDMVLCGSNYGRVRAMLDENGKPVKEAGPSIPVEILGLDGTPEAGDELSVVADEKKAREVALFRQGKYREVKLARAHAGKLENIFETMGQEEKKTLNIVLKTDVRGSLEALQGSLGGLGNDEVQVRVIGGGVGGITESDANLALASNAVLFGFNVRADAGARKIVEQEGLDMRYYNVIYDIIEDVKKALTGMLGSDVRENILGVAEVRDVFRSPKFGAIAGCMVIEGTVYRNRPIRVLRDDVVIFEGELESLRRFKDDASEVRSGMECGIGVKSYNDVKVGDKIEVFEKVQVARTL.

The tract at residues 94 to 263 (QRSPEEIQAE…HGFQNPTGPV (170 aa)) is disordered. Residues 96 to 135 (SPEEIQAEQKRELDERRAAENAARDKVEAEVRQRNEEQAR) show a composition bias toward basic and acidic residues. Low complexity-rich tracts occupy residues 136-148 (RQAA…APAP) and 158-176 (AAPV…ASED). Composition is skewed to basic and acidic residues over residues 177 to 206 (AAAR…RGEA) and 230 to 239 (TTDEESDGAR). The segment covering 240–253 (RGRGGKSKLKKRNQ) has biased composition (basic residues). In terms of domain architecture, tr-type G spans 346–513 (SRAPVVTVMG…AVLLQAEILE (168 aa)). Residues 355-362 (GHVDHGKT) are G1. A GTP-binding site is contributed by 355 to 362 (GHVDHGKT). The interval 380 to 384 (GITQH) is G2. Residues 401–404 (DTPG) are G3. Residues 401–405 (DTPGH) and 455–458 (NKID) each bind GTP. The G4 stretch occupies residues 455–458 (NKID). The segment at 491 to 493 (SAK) is G5.

The protein belongs to the TRAFAC class translation factor GTPase superfamily. Classic translation factor GTPase family. IF-2 subfamily.

The protein resides in the cytoplasm. In terms of biological role, one of the essential components for the initiation of protein synthesis. Protects formylmethionyl-tRNA from spontaneous hydrolysis and promotes its binding to the 30S ribosomal subunits. Also involved in the hydrolysis of GTP during the formation of the 70S ribosomal complex. The protein is Translation initiation factor IF-2 of Pseudomonas putida (strain ATCC 47054 / DSM 6125 / CFBP 8728 / NCIMB 11950 / KT2440).